The chain runs to 177 residues: B-phycoerythrin beta chain (177 aa).

(2R,3E)-phycoerythrobilin-binding positions include Lys-28, Asn-35, Asp-39, Cys-50, Asp-54, Cys-61, Asn-72, 77–78, Cys-82, Arg-129, 147–148, 154–158, and Cys-158; these read RR, SQ, and PQGDC. An N4-methylasparagine modification is found at Asn-72.

This sequence belongs to the phycobiliprotein family. In terms of assembly, heterotetramer of 2 different alpha chains and 2 identical beta chains. The subunit composition could comprise any combination of 2 out of 4 different alpha units with an invariant beta unit. Contains three covalently linked phycoerythrobilin chromophores.

It is found in the plastid. Its subcellular location is the chloroplast thylakoid membrane. In terms of biological role, light-harvesting photosynthetic tetrapyrrole chromophore-protein from the phycobiliprotein complex. The protein is B-phycoerythrin beta chain (cpeB) of Rhodomonas sp. (strain CS 24) (Chroomonas sp. (strain CS24)).